Reading from the N-terminus, the 337-residue chain is Anthranilate phosphoribosyltransferase (337 aa).

5-phospho-alpha-D-ribose 1-diphosphate is bound by residues glycine 82, 85–86 (GD), threonine 90, 92–95 (NIST), 110–118 (KHGNRAMSS), and threonine 122. Anthranilate is bound at residue glycine 82. Residue serine 94 participates in Mg(2+) binding. Residue asparagine 113 participates in anthranilate binding. Arginine 168 provides a ligand contact to anthranilate. Mg(2+)-binding residues include aspartate 226 and glutamate 227.

Belongs to the anthranilate phosphoribosyltransferase family. In terms of assembly, homodimer. The cofactor is Mg(2+).

The enzyme catalyses N-(5-phospho-beta-D-ribosyl)anthranilate + diphosphate = 5-phospho-alpha-D-ribose 1-diphosphate + anthranilate. It participates in amino-acid biosynthesis; L-tryptophan biosynthesis; L-tryptophan from chorismate: step 2/5. In terms of biological role, catalyzes the transfer of the phosphoribosyl group of 5-phosphorylribose-1-pyrophosphate (PRPP) to anthranilate to yield N-(5'-phosphoribosyl)-anthranilate (PRA). In Phenylobacterium zucineum (strain HLK1), this protein is Anthranilate phosphoribosyltransferase.